We begin with the raw amino-acid sequence, 412 residues long: Peptidase T (412 aa).

His-84 lines the Zn(2+) pocket. Residue Asp-86 is part of the active site. Zn(2+) is bound at residue Asp-146. The Proton acceptor role is filled by Glu-179. Zn(2+) is bound by residues Glu-180, Asp-202, and His-385.

It belongs to the peptidase M20B family. It depends on Zn(2+) as a cofactor.

Its subcellular location is the cytoplasm. The catalysed reaction is Release of the N-terminal residue from a tripeptide.. Functionally, cleaves the N-terminal amino acid of tripeptides. The polypeptide is Peptidase T (Haemophilus influenzae (strain ATCC 51907 / DSM 11121 / KW20 / Rd)).